The following is a 579-amino-acid chain: Methionine--tRNA ligase (579 aa).

The short motif at 14-24 is the 'HIGH' region element; sequence PYINGVKHLGN. Residues cysteine 146, cysteine 149, cysteine 159, and cysteine 162 each coordinate Zn(2+). Positions 346 to 350 match the 'KMSKS' region motif; sequence KFSTS. ATP is bound at residue threonine 349.

It belongs to the class-I aminoacyl-tRNA synthetase family. MetG type 1 subfamily. As to quaternary structure, monomer. Zn(2+) is required as a cofactor.

Its subcellular location is the cytoplasm. It catalyses the reaction tRNA(Met) + L-methionine + ATP = L-methionyl-tRNA(Met) + AMP + diphosphate. Its function is as follows. Is required not only for elongation of protein synthesis but also for the initiation of all mRNA translation through initiator tRNA(fMet) aminoacylation. The sequence is that of Methionine--tRNA ligase from Hyphomonas neptunium (strain ATCC 15444).